The sequence spans 255 residues: Coiled-coil domain-containing 92B (255 aa).

Residues 28 to 90 (LRDLHLEILR…AAANAELRRE (63 aa)) are a coiled coil. Residues 149–255 (QRLQAPRPGP…SQPSAPGDPE (107 aa)) form a disordered region. The segment covering 166-177 (PRRRALRARRPP) has biased composition (basic residues). Residues 242-255 (QPAPSQPSAPGDPE) are compositionally biased toward pro residues.

The sequence is that of Coiled-coil domain-containing 92B from Homo sapiens (Human).